A 34-amino-acid polypeptide reads, in one-letter code: Photosystem II reaction center protein Psb30 (34 aa).

A helical membrane pass occupies residues 6 to 26 (VIGQLTSLAMIVLVGPAVIVV).

The protein belongs to the Psb30/Ycf12 family. As to quaternary structure, PSII is composed of 1 copy each of membrane proteins PsbA, PsbB, PsbC, PsbD, PsbE, PsbF, PsbH, PsbI, PsbJ, PsbK, PsbL, PsbM, PsbT, PsbX, PsbY, PsbZ, Psb30/Ycf12, peripheral proteins of the oxygen-evolving complex and a large number of cofactors. It forms dimeric complexes.

Its subcellular location is the plastid. It localises to the chloroplast thylakoid membrane. Functionally, a core subunit of photosystem II (PSII), probably helps stabilize the reaction center. This Gracilaria tenuistipitata var. liui (Red alga) protein is Photosystem II reaction center protein Psb30.